A 270-amino-acid chain; its full sequence is 5'-nucleotidase SurE (270 aa).

A divalent metal cation contacts are provided by D8, D9, S40, and N98.

This sequence belongs to the SurE nucleotidase family. Requires a divalent metal cation as cofactor.

It localises to the cytoplasm. It catalyses the reaction a ribonucleoside 5'-phosphate + H2O = a ribonucleoside + phosphate. In terms of biological role, nucleotidase that shows phosphatase activity on nucleoside 5'-monophosphates. The chain is 5'-nucleotidase SurE from Cyanothece sp. (strain PCC 7425 / ATCC 29141).